Reading from the N-terminus, the 332-residue chain is o-succinylbenzoate synthase (332 aa).

Lys-135 (proton donor) is an active-site residue. Mg(2+) contacts are provided by Asp-163, Glu-192, and Asp-215. Residue Lys-241 is the Proton acceptor of the active site.

It belongs to the mandelate racemase/muconate lactonizing enzyme family. MenC type 1 subfamily. The cofactor is a divalent metal cation.

The catalysed reaction is (1R,6R)-6-hydroxy-2-succinyl-cyclohexa-2,4-diene-1-carboxylate = 2-succinylbenzoate + H2O. It participates in quinol/quinone metabolism; 1,4-dihydroxy-2-naphthoate biosynthesis; 1,4-dihydroxy-2-naphthoate from chorismate: step 4/7. The protein operates within quinol/quinone metabolism; menaquinone biosynthesis. Converts 2-succinyl-6-hydroxy-2,4-cyclohexadiene-1-carboxylate (SHCHC) to 2-succinylbenzoate (OSB). The sequence is that of o-succinylbenzoate synthase from Vibrio cholerae serotype O1 (strain ATCC 39315 / El Tor Inaba N16961).